The chain runs to 1665 residues: Mediator of RNA polymerase II transcription subunit 13 (1665 aa).

Disordered regions lie at residues 411–460 (KETE…IDKN), 482–512 (INLD…ETKP), 551–580 (TVSQ…GTET), and 673–781 (LDSS…NQIS). Over residues 415–445 (PENESENDMEIDDLFGGDESDDNDDLEEAGN) the composition is skewed to acidic residues. Residues 499-512 (VPDKENFKPKETKP) show a composition bias toward basic and acidic residues. Residues 551–568 (TVSQSAVTTNPPSVGSAP) are compositionally biased toward low complexity. Acidic residues predominate over residues 682 to 720 (EGGEDIEDDDNDYEDEGDDDEEEEGEEEEEEESDEDEIS). Polar residues predominate over residues 728–762 (LKLNTQNESVPPQQSNYNPVNITDSGSNTTNNITD).

Belongs to the Mediator complex subunit 13 family. As to quaternary structure, component of the SRB8-11 complex, which itself associates with the Mediator complex.

The protein localises to the nucleus. In terms of biological role, component of the SRB8-11 complex. The SRB8-11 complex is a regulatory module of the Mediator complex which is itself involved in regulation of basal and activated RNA polymerase II-dependent transcription. The SRB8-11 complex may be involved in the transcriptional repression of a subset of genes regulated by Mediator. It may inhibit the association of the Mediator complex with RNA polymerase II to form the holoenzyme complex. The protein is Mediator of RNA polymerase II transcription subunit 13 (SSN2) of Candida albicans (strain SC5314 / ATCC MYA-2876) (Yeast).